Here is a 146-residue protein sequence, read N- to C-terminus: Hemoglobin subunit beta (146 aa).

Valine 1 bears the N-acetylvaline mark. Residues 2-146 (HLTGEEKSAV…VATALAHKYH (145 aa)) form the Globin domain. Threonine 12 carries the phosphothreonine modification. Serine 44 bears the Phosphoserine mark. Position 63 (histidine 63) interacts with heme b. Lysine 82 carries the N6-acetyllysine modification. Residue histidine 92 coordinates heme b. Position 93 is an S-nitrosocysteine (cysteine 93). The residue at position 144 (lysine 144) is an N6-acetyllysine.

It belongs to the globin family. In terms of assembly, heterotetramer of two alpha chains and two beta chains. As to expression, red blood cells.

Its function is as follows. Involved in oxygen transport from the lung to the various peripheral tissues. This Tursiops truncatus (Atlantic bottle-nosed dolphin) protein is Hemoglobin subunit beta (HBB).